The primary structure comprises 563 residues: Arginine--tRNA ligase (563 aa).

The 'HIGH' region signature appears at 120–130; sequence PNIAKPFHIGH.

It belongs to the class-I aminoacyl-tRNA synthetase family. Monomer.

Its subcellular location is the cytoplasm. It carries out the reaction tRNA(Arg) + L-arginine + ATP = L-arginyl-tRNA(Arg) + AMP + diphosphate. In Clostridium botulinum (strain Okra / Type B1), this protein is Arginine--tRNA ligase.